A 286-amino-acid polypeptide reads, in one-letter code: Phosphatidylserine decarboxylase proenzyme (286 aa).

Active-site charge relay system; for autoendoproteolytic cleavage activity residues include Asp-88, His-145, and Ser-251. The active-site Schiff-base intermediate with substrate; via pyruvic acid; for decarboxylase activity is Ser-251. The residue at position 251 (Ser-251) is a Pyruvic acid (Ser); by autocatalysis.

The protein belongs to the phosphatidylserine decarboxylase family. PSD-B subfamily. Prokaryotic type I sub-subfamily. Heterodimer of a large membrane-associated beta subunit and a small pyruvoyl-containing alpha subunit. The cofactor is pyruvate. In terms of processing, is synthesized initially as an inactive proenzyme. Formation of the active enzyme involves a self-maturation process in which the active site pyruvoyl group is generated from an internal serine residue via an autocatalytic post-translational modification. Two non-identical subunits are generated from the proenzyme in this reaction, and the pyruvate is formed at the N-terminus of the alpha chain, which is derived from the carboxyl end of the proenzyme. The autoendoproteolytic cleavage occurs by a canonical serine protease mechanism, in which the side chain hydroxyl group of the serine supplies its oxygen atom to form the C-terminus of the beta chain, while the remainder of the serine residue undergoes an oxidative deamination to produce ammonia and the pyruvoyl prosthetic group on the alpha chain. During this reaction, the Ser that is part of the protease active site of the proenzyme becomes the pyruvoyl prosthetic group, which constitutes an essential element of the active site of the mature decarboxylase.

The protein resides in the cell membrane. The enzyme catalyses a 1,2-diacyl-sn-glycero-3-phospho-L-serine + H(+) = a 1,2-diacyl-sn-glycero-3-phosphoethanolamine + CO2. The protein operates within phospholipid metabolism; phosphatidylethanolamine biosynthesis; phosphatidylethanolamine from CDP-diacylglycerol: step 2/2. In terms of biological role, catalyzes the formation of phosphatidylethanolamine (PtdEtn) from phosphatidylserine (PtdSer). The polypeptide is Phosphatidylserine decarboxylase proenzyme (Verminephrobacter eiseniae (strain EF01-2)).